Here is a 95-residue protein sequence, read N- to C-terminus: NELL2-interacting cell ontogeny regulator 1 (95 aa).

A signal peptide spans 1–34; that stretch reads MAPPPACRSPMSPPPPPLLLLLLSLALLGARARA.

This sequence belongs to the NICOL family. Interacts with NELL2; triggers epididymal differentiation. Interacts with cell surface receptor TFRC; the interaction mediates uptake of NICOL1 into fibroblasts. Detected in the brain (at protein level). Also expressed at low levels in the kidney, primarily in tubular epithelial cells.

Its subcellular location is the secreted. The protein localises to the cytoplasm. The protein resides in the perinuclear region. Its function is as follows. mRNA-binding protein which interacts with a range of target mRNAs including SERPINE1, ACTA2, CCN2 and COL4A1 and may promote extracellular matrix production. Binds to the 3'-UTR of SERPINE1 mRNA and stabilizes the mRNA, possibly by competing for binding with SERBP1 and preventing SERBP1-mediated mRNA degradation. Also binds to the 3'-UTR of ACTA2. Testis-derived lumicrine factor that triggers epididymal differentiation and sperm maturation. This Homo sapiens (Human) protein is NELL2-interacting cell ontogeny regulator 1.